The chain runs to 177 residues: Large ribosomal subunit protein uL6 (177 aa).

The protein belongs to the universal ribosomal protein uL6 family. Part of the 50S ribosomal subunit.

This protein binds to the 23S rRNA, and is important in its secondary structure. It is located near the subunit interface in the base of the L7/L12 stalk, and near the tRNA binding site of the peptidyltransferase center. The protein is Large ribosomal subunit protein uL6 of Actinobacillus pleuropneumoniae serotype 5b (strain L20).